The sequence spans 287 residues: 4,4'-diapophytoene synthase (287 aa).

Residues 18 to 21 (HSKS), Y41, and R45 contribute to the (2E,6E)-farnesyl diphosphate site. Residues D48 and D52 each coordinate Mg(2+). Q165 lines the (2E,6E)-farnesyl diphosphate pocket. N168 is a binding site for Mg(2+). R171 lines the (2E,6E)-farnesyl diphosphate pocket. D172 is a binding site for Mg(2+). A (2E,6E)-farnesyl diphosphate-binding site is contributed by Y248.

The protein belongs to the phytoene/squalene synthase family. CrtM subfamily. Requires Mg(2+) as cofactor.

The catalysed reaction is 2 (2E,6E)-farnesyl diphosphate = 15-cis-4,4'-diapophytoene + 2 diphosphate. It participates in carotenoid biosynthesis; staphyloxanthin biosynthesis; staphyloxanthin from farnesyl diphosphate: step 1/5. In terms of biological role, involved in the biosynthesis of the yellow-orange carotenoid staphyloxanthin, which plays a role in the virulence via its protective function against oxidative stress. Catalyzes the head-to-head condensation of two molecules of farnesyl diphosphate (FPP) into the colorless C(30) carotenoid 4,4'-diapophytoene (dehydrosqualene). The polypeptide is 4,4'-diapophytoene synthase (crtM) (Staphylococcus aureus (strain Mu50 / ATCC 700699)).